The following is a 405-amino-acid chain: uncharacterized protein (405 aa).

The next 13 helical transmembrane spans lie at 19–39 (IVSI…PLAV), 48–68 (MGFS…ATLL), 85–105 (IVVF…LADI), 106–126 (ASAW…ILGI), 129–149 (SFAG…LHIG), 156–176 (GIVT…CYAW), 178–198 (GLQG…LLAL), 224–244 (GMAL…ITLF), 252–272 (GAAF…LLFP), 283–303 (VAMI…TAAM), 309–329 (IGVL…GVVA), 344–364 (TYTV…GLVM), and 366–386 (WAGV…ALLL).

It belongs to the major facilitator superfamily. YhhS family.

It is found in the cell inner membrane. This is an uncharacterized protein from Salmonella paratyphi C (strain RKS4594).